The sequence spans 201 residues: CASP-like protein 2A1 (201 aa).

Residues 1 to 27 form a disordered region; it reads MEKRDKGSSPMATMMGSRDENEDVENT. Residues 1–30 lie on the Cytoplasmic side of the membrane; that stretch reads MEKRDKGSSPMATMMGSRDENEDVENTTRT. Residues 31 to 51 form a helical membrane-spanning segment; sequence AETMLRLVPMALCVSALVVML. The Extracellular segment spans residues 52–72; sequence KNTQTNDYGSLSYSDLGAFRY. The chain crosses the membrane as a helical span at residues 73-93; the sequence is LVHVNGICAGYSLLSAVIVAM. The Cytoplasmic portion of the chain corresponds to 94–101; it reads PRASTMPR. A helical transmembrane segment spans residues 102 to 122; it reads AWAFFLLDQVLTYVILAAGTV. Topologically, residues 123-152 are extracellular; that stretch reads STEVLYLASKGDTTITWSEACVSFGGFCHK. Residues 153 to 173 form a helical membrane-spanning segment; the sequence is ALISIVITFVVVICYAALSLL. The Cytoplasmic segment spans residues 174–201; that stretch reads SSYKLFSKYDSPVLTYPGKGIEIATFHG.

Belongs to the Casparian strip membrane proteins (CASP) family. As to quaternary structure, homodimer and heterodimers.

It localises to the cell membrane. In Populus trichocarpa (Western balsam poplar), this protein is CASP-like protein 2A1.